The primary structure comprises 306 residues: Ribonuclease Z (306 aa).

Residues H63, H65, D67, H68, H141, D211, and H269 each contribute to the Zn(2+) site. D67 acts as the Proton acceptor in catalysis.

It belongs to the RNase Z family. As to quaternary structure, homodimer. Zn(2+) serves as cofactor.

It catalyses the reaction Endonucleolytic cleavage of RNA, removing extra 3' nucleotides from tRNA precursor, generating 3' termini of tRNAs. A 3'-hydroxy group is left at the tRNA terminus and a 5'-phosphoryl group is left at the trailer molecule.. In terms of biological role, zinc phosphodiesterase, which displays some tRNA 3'-processing endonuclease activity. Probably involved in tRNA maturation, by removing a 3'-trailer from precursor tRNA. This chain is Ribonuclease Z, found in Staphylococcus aureus (strain bovine RF122 / ET3-1).